We begin with the raw amino-acid sequence, 342 residues long: WW domain binding protein 1-like (342 aa).

Residues 42 to 62 traverse the membrane as a helical segment; the sequence is LWWFWLVWTIIIILSCCCVCH. Disordered regions lie at residues 133–247 and 292–320; these read LPPQ…RRFT and PGDE…RPPA. The span at 158 to 173 shows a compositional bias: low complexity; that stretch reads SSPLSEPSRSSTRPPS. A Phosphoserine modification is found at S173. The segment covering 212–240 has biased composition (basic and acidic residues); it reads LDKDAECREELLKDDSSEHGAPDSKEKTP.

The protein localises to the membrane. The polypeptide is WW domain binding protein 1-like (WBP1L) (Homo sapiens (Human)).